Here is a 289-residue protein sequence, read N- to C-terminus: Diaminopimelate epimerase (289 aa).

Substrate is bound by residues asparagine 17, glutamine 47, and asparagine 67. Cysteine 76 serves as the catalytic Proton donor. Substrate is bound by residues 77–78, asparagine 164, asparagine 198, and 216–217; these read GN and ER. Cysteine 225 (proton acceptor) is an active-site residue. 226–227 contacts substrate; that stretch reads GS.

Belongs to the diaminopimelate epimerase family. Homodimer.

It localises to the cytoplasm. The enzyme catalyses (2S,6S)-2,6-diaminopimelate = meso-2,6-diaminopimelate. Its pathway is amino-acid biosynthesis; L-lysine biosynthesis via DAP pathway; DL-2,6-diaminopimelate from LL-2,6-diaminopimelate: step 1/1. In terms of biological role, catalyzes the stereoinversion of LL-2,6-diaminopimelate (L,L-DAP) to meso-diaminopimelate (meso-DAP), a precursor of L-lysine and an essential component of the bacterial peptidoglycan. This chain is Diaminopimelate epimerase, found in Bradyrhizobium sp. (strain BTAi1 / ATCC BAA-1182).